The primary structure comprises 643 residues: Manganese lipoxygenase (643 aa).

A Lipoxygenase domain is found at 166 to 643; sequence WYTDEVFAQQ…PEQLANAIVI (478 aa). Mn(2+) is bound by residues His325, His330, His510, Asn514, and Ile643.

Belongs to the lipoxygenase family. Requires Mn(2+) as cofactor.

The enzyme catalyses (9Z,12Z)-octadecadienoate + O2 = (13S)-hydroperoxy-(9Z,11E)-octadecadienoate. In terms of biological role, lipoxygenase that metabolizes linoleic and alpha-linolenic acids to 13S-hydroperoxy fatty acids. The chain is Manganese lipoxygenase from Pleurotus sapidus (Oyster mushroom).